A 2053-amino-acid polypeptide reads, in one-letter code: Cell adhesion molecule DSCAML1 (2053 aa).

Residues 1 to 18 (MWLVTFLLLLDSLHKARP) form the signal peptide. 9 Ig-like C2-type domains span residues 19 to 119 (EDVG…NIRV), 115 to 217 (PNIR…ARLS), 226 to 306 (PTIL…AEAT), 314 to 402 (PLHV…AIIA), 408 to 501 (PRIV…ARIN), 506 to 586 (PSIR…LSIS), 596 to 685 (PPLI…RQLI), 690 to 784 (PRFV…MFLT), and 788 to 885 (PAMI…LTVQ). Residues 19–1591 (EDVGTSLYFV…AQGEGDDVKK (1573 aa)) lie on the Extracellular side of the membrane. N-linked (GlcNAc...) asparagine glycans are attached at residues Asn-29 and Asn-79. Cystine bridges form between Cys-47–Cys-103, Cys-146–Cys-198, Cys-247–Cys-294, Cys-336–Cys-386, and Cys-429–Cys-485. N-linked (GlcNAc...) asparagine glycosylation is found at Asn-368, Asn-471, Asn-513, Asn-556, Asn-666, Asn-710, Asn-749, Asn-796, and Asn-809. 2 disulfide bridges follow: Cys-526–Cys-575 and Cys-617–Cys-669. Cys-711 and Cys-767 are oxidised to a cystine. A disulfide bridge links Cys-810 with Cys-867. Fibronectin type-III domains are found at residues 887–984 (PPDP…TEEA), 989–1088 (PPMD…TLED), 1093–1189 (PPEN…TKED), and 1193–1288 (PPAG…AGKA). N-linked (GlcNAc...) asparagine glycans are attached at residues Asn-926, Asn-1082, Asn-1144, Asn-1162, Asn-1275, and Asn-1345. Residues 1278–1377 (EKVTIEPAGK…TGGFDTIIVN (100 aa)) form the Ig-like C2-type 10 domain. A disulfide bridge links Cys-1311 with Cys-1363. Fibronectin type-III domains follow at residues 1383 to 1477 (PPDQ…THGR) and 1478 to 1578 (EPSF…TIPP). Residues Asn-1492, Asn-1531, and Asn-1561 are each glycosylated (N-linked (GlcNAc...) asparagine). Residues 1592–1612 (LFTIGCPVILATLGVALLFIV) traverse the membrane as a helical segment. The Cytoplasmic segment spans residues 1613–2053 (RKKRKEKRLK…GAYSKSYTLV (441 aa)). Disordered stretches follow at residues 1715–1741 (PLID…HSTR), 1773–1803 (HGVT…STES), 1840–1862 (SSDQ…STPS), and 1974–2053 (LAMP…YTLV). Residues 1732–1741 (KNVKSAHSTR) show a composition bias toward basic residues. Positions 1773–1789 (HGVTVTESDSYSASLSQ) are enriched in polar residues. The segment covering 1977-2009 (PAPPAGTAPPAPGPTPAEPPTAPSAAPPAPSTE) has biased composition (pro residues). Residues 2029–2041 (EMSTSGVGRSQKQ) show a composition bias toward polar residues.

In terms of assembly, homodimer; mediates homophilic interactions to promote cell adhesion. In terms of tissue distribution, detected in heart, liver, pancreas, skeletal muscle, kidney and in brain, in particular in the amygdala, caudate nucleus, corpus callosum, hippocampus, substantia nigra, thalamus and subthalamus.

Its subcellular location is the cell membrane. The protein resides in the synapse. In terms of biological role, cell adhesion molecule that plays a role in neuronal self-avoidance. Promotes repulsion between specific neuronal processes of either the same cell or the same subtype of cells. Promotes both isoneuronal self-avoidance for creating an orderly neurite arborization in retinal rod bipolar cells and heteroneuronal self-avoidance to maintain mosaic spacing between AII amacrine cells. Adhesion molecule that promotes lamina-specific synaptic connections in the retina: expressed in specific subsets of interneurons and retinal ganglion cells (RGCs) and promotes synaptic connectivity via homophilic interactions. This Homo sapiens (Human) protein is Cell adhesion molecule DSCAML1 (DSCAML1).